A 522-amino-acid polypeptide reads, in one-letter code: 2-isopropylmalate synthase (522 aa).

One can recognise a Pyruvate carboxyltransferase domain in the interval 5-267 (VIIFDTTLRD…ETGINAKEIH (263 aa)). Mn(2+) is bound by residues Asp-14, His-202, His-204, and Asn-238. A regulatory domain region spans residues 392–522 (QLQQLVVQSD…MHKNRELGGV (131 aa)).

This sequence belongs to the alpha-IPM synthase/homocitrate synthase family. LeuA type 1 subfamily. Homodimer. Mn(2+) serves as cofactor.

The protein resides in the cytoplasm. It catalyses the reaction 3-methyl-2-oxobutanoate + acetyl-CoA + H2O = (2S)-2-isopropylmalate + CoA + H(+). Its pathway is amino-acid biosynthesis; L-leucine biosynthesis; L-leucine from 3-methyl-2-oxobutanoate: step 1/4. Its function is as follows. Catalyzes the condensation of the acetyl group of acetyl-CoA with 3-methyl-2-oxobutanoate (2-ketoisovalerate) to form 3-carboxy-3-hydroxy-4-methylpentanoate (2-isopropylmalate). This Shewanella sp. (strain MR-7) protein is 2-isopropylmalate synthase.